The chain runs to 38 residues: Cytochrome b6-f complex subunit 5 (38 aa).

A helical transmembrane segment spans residues 5–25; it reads LLCGIVLGLIPVTLLGLFVDA.

The protein belongs to the PetG family. The 4 large subunits of the cytochrome b6-f complex are cytochrome b6, subunit IV (17 kDa polypeptide, PetD), cytochrome f and the Rieske protein, while the 4 small subunits are PetG, PetL, PetM and PetN. The complex functions as a dimer.

It is found in the cellular thylakoid membrane. Its function is as follows. Component of the cytochrome b6-f complex, which mediates electron transfer between photosystem II (PSII) and photosystem I (PSI), cyclic electron flow around PSI, and state transitions. PetG is required for either the stability or assembly of the cytochrome b6-f complex. In Prochlorococcus marinus (strain MIT 9313), this protein is Cytochrome b6-f complex subunit 5.